The sequence spans 414 residues: 3-phosphoshikimate 1-carboxyvinyltransferase (414 aa).

3 residues coordinate 3-phosphoshikimate: Lys-20, Ser-21, and Arg-25. Lys-20 provides a ligand contact to phosphoenolpyruvate. Phosphoenolpyruvate is bound by residues Gly-88 and Arg-116. The 3-phosphoshikimate site is built by Thr-157, Ser-158, Gln-159, Ser-183, Asp-297, and Lys-324. Residue Gln-159 coordinates phosphoenolpyruvate. The active-site Proton acceptor is Asp-297. The phosphoenolpyruvate site is built by Arg-328, Arg-369, and Lys-395.

It belongs to the EPSP synthase family. As to quaternary structure, monomer.

The protein resides in the cytoplasm. It carries out the reaction 3-phosphoshikimate + phosphoenolpyruvate = 5-O-(1-carboxyvinyl)-3-phosphoshikimate + phosphate. It participates in metabolic intermediate biosynthesis; chorismate biosynthesis. Functionally, catalyzes the transfer of the enolpyruvyl moiety of phosphoenolpyruvate (PEP) to the 5-hydroxyl of shikimate-3-phosphate (S3P) to produce enolpyruvyl shikimate-3-phosphate and inorganic phosphate. This is 3-phosphoshikimate 1-carboxyvinyltransferase from Caldivirga maquilingensis (strain ATCC 700844 / DSM 13496 / JCM 10307 / IC-167).